Consider the following 290-residue polypeptide: Arylamine N-acetyltransferase, pineal gland isozyme NAT-3 (290 aa).

Residue cysteine 68 is the Acyl-thioester intermediate of the active site. Active-site residues include histidine 107 and aspartate 122.

It belongs to the arylamine N-acetyltransferase family.

It carries out the reaction an arylamine + acetyl-CoA = an N-acetylarylamine + CoA. It catalyses the reaction an N-hydroxyarylamine + acetyl-CoA = an N-acetoxyarylamine + CoA. Its function is as follows. Catalyzes the N- or O-acetylation of various arylamine and heterocyclic amine substrates, and participates in the detoxification of a plethora of hydrazine and arylamine drugs. This chain is Arylamine N-acetyltransferase, pineal gland isozyme NAT-3, found in Gallus gallus (Chicken).